The sequence spans 650 residues: Threonine--tRNA ligase (650 aa).

In terms of domain architecture, TGS spans 1 to 66 (MVQITLPDGS…EHDAQLAIVT (66 aa)). The interval 247–538 (DHRKIGRDLD…LIENHAGAMP (292 aa)) is catalytic. 3 residues coordinate Zn(2+): Cys338, His389, and His515.

This sequence belongs to the class-II aminoacyl-tRNA synthetase family. Homodimer. The cofactor is Zn(2+).

It localises to the cytoplasm. It catalyses the reaction tRNA(Thr) + L-threonine + ATP = L-threonyl-tRNA(Thr) + AMP + diphosphate + H(+). Its function is as follows. Catalyzes the attachment of threonine to tRNA(Thr) in a two-step reaction: L-threonine is first activated by ATP to form Thr-AMP and then transferred to the acceptor end of tRNA(Thr). Also edits incorrectly charged L-seryl-tRNA(Thr). In Bordetella petrii (strain ATCC BAA-461 / DSM 12804 / CCUG 43448), this protein is Threonine--tRNA ligase.